The primary structure comprises 80 residues: Cell division topological specificity factor (80 aa).

The protein belongs to the MinE family.

Functionally, prevents the cell division inhibition by proteins MinC and MinD at internal division sites while permitting inhibition at polar sites. This ensures cell division at the proper site by restricting the formation of a division septum at the midpoint of the long axis of the cell. The sequence is that of Cell division topological specificity factor from Wolinella succinogenes (strain ATCC 29543 / DSM 1740 / CCUG 13145 / JCM 31913 / LMG 7466 / NCTC 11488 / FDC 602W) (Vibrio succinogenes).